Consider the following 550-residue polypeptide: Forkhead box protein N4 (550 aa).

A DNA-binding region (fork-head) is located at residues 231 to 327 (KPIYSYSCLI…EEMQKWKRKD (97 aa)). Low complexity predominate over residues 402-411 (LQNQSRLAPS). Positions 402-437 (LQNQSRLAPSSPAPAQTPPLHTVPDMTNSSLPQHPA) are disordered.

Isoform 1 is expressed mainly in adult thymus. Isoform 2 is detected in adult skin. Isoform 3 is expressed in adult brain and embryo. Prominent expression sites include the olfactory placode, the basal layer of the olfactory epithelium, the neuroepithelium of the developing retina, the germinal zone of the differentiated eye, regions of motoneuron development in the neural tube and periventricular regions of the brain.

The protein resides in the nucleus. Transcription factor essential for neural and some non-neural tissues development. Binds to an 11-bp consensus sequence containing the invariant tetranucleotide 5'-ACGC-3'. During development of the central nervous system, required to specify the amacrine and horizontal cell fates from multipotent retinal progenitors while suppressing the alternative photoreceptor cell fates. Drives commitment of p2 progenitors to the V2b interneuron fates during spinal cord neurogenesis. In development of non-neural tissues, plays an essential role in the specification of the atrioventricular canal. This Danio rerio (Zebrafish) protein is Forkhead box protein N4 (foxn4).